A 393-amino-acid polypeptide reads, in one-letter code: NADH-quinone oxidoreductase subunit D (393 aa).

The protein belongs to the complex I 49 kDa subunit family. In terms of assembly, NDH-1 is composed of 14 different subunits. Subunits NuoB, C, D, E, F, and G constitute the peripheral sector of the complex.

The protein localises to the cell inner membrane. The enzyme catalyses a quinone + NADH + 5 H(+)(in) = a quinol + NAD(+) + 4 H(+)(out). In terms of biological role, NDH-1 shuttles electrons from NADH, via FMN and iron-sulfur (Fe-S) centers, to quinones in the respiratory chain. The immediate electron acceptor for the enzyme in this species is believed to be ubiquinone. Couples the redox reaction to proton translocation (for every two electrons transferred, four hydrogen ions are translocated across the cytoplasmic membrane), and thus conserves the redox energy in a proton gradient. The chain is NADH-quinone oxidoreductase subunit D from Ehrlichia canis (strain Jake).